The sequence spans 624 residues: Chaperone protein HtpG (624 aa).

Residues 1–336 form an a; substrate-binding region; sequence MKGQETRGFQ…SSDLPLNVSR (336 aa). Residues 337–552 are b; it reads EILQDSTVTR…ADEMSTQMAK (216 aa). The tract at residues 553-624 is c; sequence LFAAAGQKVP…IRRMNQLLVS (72 aa).

This sequence belongs to the heat shock protein 90 family. In terms of assembly, homodimer.

The protein resides in the cytoplasm. Its function is as follows. Molecular chaperone. Has ATPase activity. In Shigella boydii serotype 4 (strain Sb227), this protein is Chaperone protein HtpG.